A 305-amino-acid chain; its full sequence is Protein MFI (305 aa).

In terms of assembly, can homodimerize. Interacts with MFF; the interaction inhibits MFF interaction with DNM1L.

It is found in the cytoplasm. It localises to the cytosol. The protein localises to the mitochondrion outer membrane. Acts as an inhibitor of mitochondrial fission. Interacts with MFF and prevents DNM1L recruitment to mitochondria, promoting a more fused mitochondrial network. This chain is Protein MFI, found in Rattus norvegicus (Rat).